A 335-amino-acid polypeptide reads, in one-letter code: Methionine import ATP-binding protein MetN 1 (335 aa).

The region spanning 2-242 (IEFHNVHKTY…PQHATTRRFV (241 aa)) is the ABC transporter domain. ATP is bound at residue 38–45 (GHSGAGKS).

The protein belongs to the ABC transporter superfamily. Methionine importer (TC 3.A.1.24) family. The complex is composed of two ATP-binding proteins (MetN), two transmembrane proteins (MetI) and a solute-binding protein (MetQ).

The protein resides in the cell inner membrane. The catalysed reaction is L-methionine(out) + ATP + H2O = L-methionine(in) + ADP + phosphate + H(+). It catalyses the reaction D-methionine(out) + ATP + H2O = D-methionine(in) + ADP + phosphate + H(+). Functionally, part of the ABC transporter complex MetNIQ involved in methionine import. Responsible for energy coupling to the transport system. This chain is Methionine import ATP-binding protein MetN 1, found in Pseudomonas syringae pv. syringae (strain B728a).